A 297-amino-acid polypeptide reads, in one-letter code: 3-mercaptopyruvate sulfurtransferase (297 aa).

The residue at position 2 (Ala-2) is an N-acetylalanine. Phosphoserine is present on residues Ser-3, Trp-15, Pro-23, and Ser-35. Positions 25–144 (AGQPLQLLDA…WLRQNLPLSS (120 aa)) constitute a Rhodanese 1 domain. Residue Lys-40 is modified to N6-acetyllysine; alternate. The residue at position 40 (Lys-40) is an N6-succinyllysine; alternate. The interval 145 to 160 (GKSQPAPAEFRAQLDP) is hinge. N6-succinyllysine occurs at positions 146 and 164. The Rhodanese 2 domain occupies 174-288 (ESRRFQVVDS…WYMRARPEDV (115 aa)). Residue Arg-188 participates in substrate binding. Cys-248 serves as the catalytic Cysteine persulfide intermediate.

Monomer (active form). Homodimer; disulfide-linked (inactive form).

It localises to the cytoplasm. It is found in the mitochondrion. Its subcellular location is the synapse. The protein localises to the synaptosome. The catalysed reaction is 2-oxo-3-sulfanylpropanoate + [thioredoxin]-dithiol = [thioredoxin]-disulfide + hydrogen sulfide + pyruvate + H(+). By oxidative stress, and thioredoxin. Under oxidative stress conditions, the catalytic cysteine site is converted to a sulfenate which inhibits the MPST enzyme activity. Reduced thioredoxin cleaves an intersubunit disulfide bond to turn on the redox switch and reactivate the enzyme. Transfer of a sulfur ion to cyanide or to other thiol compounds. Also has weak rhodanese activity. Detoxifies cyanide and is required for thiosulfate biosynthesis. Acts as an antioxidant. In combination with cysteine aminotransferase (CAT), contributes to the catabolism of cysteine and is an important producer of hydrogen sulfide in the brain, retina and vascular endothelial cells. Hydrogen sulfide H(2)S is an important synaptic modulator, signaling molecule, smooth muscle contractor and neuroprotectant. Its production by the 3MST/CAT pathway is regulated by calcium ions. The protein is 3-mercaptopyruvate sulfurtransferase (MPST) of Homo sapiens (Human).